Reading from the N-terminus, the 155-residue chain is UPF0178 protein RPC_3085 (155 aa).

The protein belongs to the UPF0178 family.

This Rhodopseudomonas palustris (strain BisB18) protein is UPF0178 protein RPC_3085.